The sequence spans 1405 residues: DNA-directed RNA polymerase subunit beta' (1405 aa).

Zn(2+) is bound by residues cysteine 71, cysteine 73, cysteine 86, and cysteine 89. Positions 462, 464, and 466 each coordinate Mg(2+). Residues cysteine 810, cysteine 884, cysteine 891, and cysteine 894 each coordinate Zn(2+).

The protein belongs to the RNA polymerase beta' chain family. The RNAP catalytic core consists of 2 alpha, 1 beta, 1 beta' and 1 omega subunit. When a sigma factor is associated with the core the holoenzyme is formed, which can initiate transcription. It depends on Mg(2+) as a cofactor. The cofactor is Zn(2+).

It carries out the reaction RNA(n) + a ribonucleoside 5'-triphosphate = RNA(n+1) + diphosphate. In terms of biological role, DNA-dependent RNA polymerase catalyzes the transcription of DNA into RNA using the four ribonucleoside triphosphates as substrates. The polypeptide is DNA-directed RNA polymerase subunit beta' (Maricaulis maris (strain MCS10) (Caulobacter maris)).